The sequence spans 322 residues: UV DNA damage endonuclease (322 aa).

This sequence belongs to the uve1/UvsE family.

In terms of biological role, component in a DNA repair pathway. Removal of UV LIGHT damaged nucleotides. Recognizes pyrimidine dimers and cleave a phosphodiester bond immediately 5' to the lesion. The protein is UV DNA damage endonuclease of Halalkalibacterium halodurans (strain ATCC BAA-125 / DSM 18197 / FERM 7344 / JCM 9153 / C-125) (Bacillus halodurans).